The primary structure comprises 713 residues: Polyribonucleotide nucleotidyltransferase (713 aa).

Asp-493 and Asp-499 together coordinate Mg(2+). The KH domain occupies 560–619 (PRMITIKINPEKIRDVIGKGGSVIRALTEETGTTIDISDDGVVTIASTNSEGMAEAKKRI). The 69-residue stretch at 629 to 697 (GHVYEGTVLK…EKGRVRLSAK (69 aa)) folds into the S1 motif domain.

Belongs to the polyribonucleotide nucleotidyltransferase family. Requires Mg(2+) as cofactor.

It localises to the cytoplasm. The catalysed reaction is RNA(n+1) + phosphate = RNA(n) + a ribonucleoside 5'-diphosphate. Its function is as follows. Involved in mRNA degradation. Catalyzes the phosphorolysis of single-stranded polyribonucleotides processively in the 3'- to 5'-direction. In Burkholderia pseudomallei (strain 1106a), this protein is Polyribonucleotide nucleotidyltransferase.